Here is a 545-residue protein sequence, read N- to C-terminus: Phenylalanine--tRNA ligase beta subunit (545 aa).

The 77-residue stretch at 266–342 (LSPALRNINV…IGAGFGNLEA (77 aa)) folds into the B5 domain. Positions 320, 326, 329, and 330 each coordinate Mg(2+).

It belongs to the phenylalanyl-tRNA synthetase beta subunit family. Type 2 subfamily. Tetramer of two alpha and two beta subunits. Mg(2+) is required as a cofactor.

It localises to the cytoplasm. It carries out the reaction tRNA(Phe) + L-phenylalanine + ATP = L-phenylalanyl-tRNA(Phe) + AMP + diphosphate + H(+). This Methanospirillum hungatei JF-1 (strain ATCC 27890 / DSM 864 / NBRC 100397 / JF-1) protein is Phenylalanine--tRNA ligase beta subunit.